A 468-amino-acid chain; its full sequence is Alpha-N-acetylgalactosaminidase (468 aa).

Positions 1–30 form a signal peptide, tat-type signal; it reads MENTRRNFLKKVTAAGIGAAGLAVTDQAMA. NAD(+) contacts are provided by residues 62-63, D84, 133-136, 154-155, and N183; these read SR, WEWH, and EV. Y212 contacts substrate. 243–247 contributes to the NAD(+) binding site; the sequence is AEAQW. Substrate-binding positions include R248, 260–263, and Y342; that span reads YPTH. Residue Y260 coordinates NAD(+).

This sequence belongs to the Gfo/Idh/MocA family. Glycosyl hydrolase 109 subfamily. It depends on NAD(+) as a cofactor. In terms of processing, predicted to be exported by the Tat system. The position of the signal peptide cleavage has not been experimentally proven.

The enzyme catalyses Cleavage of non-reducing alpha-(1-&gt;3)-N-acetylgalactosamine residues from human blood group A and AB mucin glycoproteins, Forssman hapten and blood group A lacto series glycolipids.. Its function is as follows. Glycosidase that has specific alpha-N-acetylgalactosaminidase activity. This is Alpha-N-acetylgalactosaminidase (nagA) from Tannerella forsythia (Bacteroides forsythus).